The primary structure comprises 116 residues: Iron-sulfur cluster insertion protein ErpA (116 aa).

The iron-sulfur cluster site is built by Cys-44, Cys-108, and Cys-110.

The protein belongs to the HesB/IscA family. As to quaternary structure, homodimer. Requires iron-sulfur cluster as cofactor.

Functionally, required for insertion of 4Fe-4S clusters for at least IspG. In Stutzerimonas stutzeri (strain A1501) (Pseudomonas stutzeri), this protein is Iron-sulfur cluster insertion protein ErpA.